Reading from the N-terminus, the 394-residue chain is Lipoyl synthase, chloroplastic (394 aa).

The N-terminal 36 residues, 1-36 (MMHHCSITKPTFSISISTQKLHHHSSKFLNLGFRIR), are a transit peptide targeting the chloroplast. Positions 127, 132, 138, 158, 162, 165, and 373 each coordinate [4Fe-4S] cluster. Positions 141 to 362 (GGGDGVATAT…KTYGESIGFR (222 aa)) constitute a Radical SAM core domain.

Belongs to the radical SAM superfamily. Lipoyl synthase family. The cofactor is [4Fe-4S] cluster. As to expression, expressed in roots, leaves and flowers.

Its subcellular location is the plastid. The protein localises to the chloroplast. The catalysed reaction is [[Fe-S] cluster scaffold protein carrying a second [4Fe-4S](2+) cluster] + N(6)-octanoyl-L-lysyl-[protein] + 2 oxidized [2Fe-2S]-[ferredoxin] + 2 S-adenosyl-L-methionine + 4 H(+) = [[Fe-S] cluster scaffold protein] + N(6)-[(R)-dihydrolipoyl]-L-lysyl-[protein] + 4 Fe(3+) + 2 hydrogen sulfide + 2 5'-deoxyadenosine + 2 L-methionine + 2 reduced [2Fe-2S]-[ferredoxin]. Its pathway is protein modification; protein lipoylation via endogenous pathway; protein N(6)-(lipoyl)lysine from octanoyl-[acyl-carrier-protein]: step 2/2. Its function is as follows. Catalyzes the radical-mediated insertion of two sulfur atoms into the C-6 and C-8 positions of the octanoyl moiety bound to the lipoyl domains of lipoate-dependent enzymes, thereby converting the octanoylated domains into lipoylated derivatives. Together with LIP2P and LIP2P2 is essential for de novo plastidial protein lipoylation during seed development. This is Lipoyl synthase, chloroplastic from Arabidopsis thaliana (Mouse-ear cress).